The chain runs to 193 residues: Flagellar transcriptional regulator FlhC (193 aa).

Residues C138, C141, C158, and C161 each contribute to the Zn(2+) site.

Belongs to the FlhC family. As to quaternary structure, heterohexamer composed of two FlhC and four FlhD subunits. Each FlhC binds a FlhD dimer, forming a heterotrimer, and a hexamer assembles by dimerization of two heterotrimers. Zn(2+) is required as a cofactor.

The protein localises to the cytoplasm. Its function is as follows. Functions in complex with FlhD as a master transcriptional regulator that regulates transcription of several flagellar and non-flagellar operons by binding to their promoter region. Activates expression of class 2 flagellar genes, including fliA, which is a flagellum-specific sigma factor that turns on the class 3 genes. Also regulates genes whose products function in a variety of physiological pathways. This chain is Flagellar transcriptional regulator FlhC, found in Proteus mirabilis.